An 84-amino-acid polypeptide reads, in one-letter code: Small ribosomal subunit protein uS17 (84 aa).

Belongs to the universal ribosomal protein uS17 family. In terms of assembly, part of the 30S ribosomal subunit.

In terms of biological role, one of the primary rRNA binding proteins, it binds specifically to the 5'-end of 16S ribosomal RNA. This chain is Small ribosomal subunit protein uS17, found in Klebsiella pneumoniae subsp. pneumoniae (strain ATCC 700721 / MGH 78578).